An 89-amino-acid polypeptide reads, in one-letter code: Small ribosomal subunit protein uS15 (89 aa).

Belongs to the universal ribosomal protein uS15 family. As to quaternary structure, part of the 30S ribosomal subunit. Forms a bridge to the 50S subunit in the 70S ribosome, contacting the 23S rRNA.

Functionally, one of the primary rRNA binding proteins, it binds directly to 16S rRNA where it helps nucleate assembly of the platform of the 30S subunit by binding and bridging several RNA helices of the 16S rRNA. In terms of biological role, forms an intersubunit bridge (bridge B4) with the 23S rRNA of the 50S subunit in the ribosome. This Acinetobacter baumannii (strain AB307-0294) protein is Small ribosomal subunit protein uS15.